We begin with the raw amino-acid sequence, 442 residues long: Septin-8 (442 aa).

The residue at position 2 (A2) is an N-acetylalanine. Position 10 is a phosphoserine (S10). Residues 41–307 (QGFSFNILCV…ELYRRCKLEE (267 aa)) enclose the Septin-type G domain. Residues 51-58 (GETGIGKS) are G1 motif. GTP is bound by residues 51-58 (GETGIGKS), G106, 187-195 (KADTISKSE), G241, and R256. The tract at residues 103–106 (DAVG) is G3 motif. Residues 186 to 189 (AKAD) are G4 motif. Residues 322-410 (LQETYEAKRK…RKAAVEALQS (89 aa)) adopt a coiled-coil conformation. The span at 377 to 391 (HQEEKRKVEEKRREL) shows a compositional bias: basic and acidic residues. Residues 377–442 (HQEEKRKVEE…WSSIYSVTIP (66 aa)) are disordered. 2 stretches are compositionally biased toward polar residues: residues 408–420 (LQSQ…SQQP) and 432–442 (GWSSIYSVTIP).

The protein belongs to the TRAFAC class TrmE-Era-EngA-EngB-Septin-like GTPase superfamily. Septin GTPase family. As to quaternary structure, septins polymerize into heterooligomeric protein complexes that form filaments, and can associate with cellular membranes, actin filaments and microtubules. GTPase activity is required for filament formation. Interacts with CDK14, SEPTIN4, SEPTIN5 and SEPTIN7. Interacts with VAMP2; the interaction inhibits interaction of VAMP2 with SYP. Interacts with STX1A.

The protein resides in the cytoplasm. It localises to the cytoskeleton. It is found in the synapse. The protein localises to the cell projection. Its subcellular location is the axon. The protein resides in the cytoplasmic vesicle. It localises to the secretory vesicle. It is found in the synaptic vesicle membrane. The protein localises to the presynapse. Filament-forming cytoskeletal GTPase. May play a role in platelet secretion. Seems to participate in the process of SNARE complex formation in synaptic vesicles. In Callithrix jacchus (White-tufted-ear marmoset), this protein is Septin-8.